The chain runs to 509 residues: Maturase K (509 aa).

The protein belongs to the intron maturase 2 family. MatK subfamily.

The protein resides in the plastid. It is found in the chloroplast. Usually encoded in the trnK tRNA gene intron. Probably assists in splicing its own and other chloroplast group II introns. The polypeptide is Maturase K (Metasequoia glyptostroboides (Dawn redwood)).